The following is a 476-amino-acid chain: Glutamate--tRNA ligase (476 aa).

The short motif at 9 to 19 (PSPTGTLHIGT) is the 'HIGH' region element. Positions 248–252 (KLSKR) match the 'KMSKS' region motif. Lysine 251 is an ATP binding site.

Belongs to the class-I aminoacyl-tRNA synthetase family. Glutamate--tRNA ligase type 1 subfamily. Monomer.

It localises to the cytoplasm. It carries out the reaction tRNA(Glu) + L-glutamate + ATP = L-glutamyl-tRNA(Glu) + AMP + diphosphate. Functionally, catalyzes the attachment of glutamate to tRNA(Glu) in a two-step reaction: glutamate is first activated by ATP to form Glu-AMP and then transferred to the acceptor end of tRNA(Glu). This is Glutamate--tRNA ligase from Synechococcus sp. (strain CC9311).